The following is a 370-amino-acid chain: Dual-specificity RNA methyltransferase RlmN (370 aa).

Glu93 serves as the catalytic Proton acceptor. The Radical SAM core domain maps to 99-331 (DRKRGTLCVS…TRVRRTRGDD (233 aa)). A disulfide bridge links Cys106 with Cys336. [4Fe-4S] cluster is bound by residues Cys113, Cys117, and Cys120. S-adenosyl-L-methionine is bound by residues 162–163 (GE), Ser194, 216–218 (SLH), and Asn293. Cys336 serves as the catalytic S-methylcysteine intermediate.

The protein belongs to the radical SAM superfamily. RlmN family. The cofactor is [4Fe-4S] cluster.

Its subcellular location is the cytoplasm. The enzyme catalyses adenosine(2503) in 23S rRNA + 2 reduced [2Fe-2S]-[ferredoxin] + 2 S-adenosyl-L-methionine = 2-methyladenosine(2503) in 23S rRNA + 5'-deoxyadenosine + L-methionine + 2 oxidized [2Fe-2S]-[ferredoxin] + S-adenosyl-L-homocysteine. The catalysed reaction is adenosine(37) in tRNA + 2 reduced [2Fe-2S]-[ferredoxin] + 2 S-adenosyl-L-methionine = 2-methyladenosine(37) in tRNA + 5'-deoxyadenosine + L-methionine + 2 oxidized [2Fe-2S]-[ferredoxin] + S-adenosyl-L-homocysteine. Functionally, specifically methylates position 2 of adenine 2503 in 23S rRNA and position 2 of adenine 37 in tRNAs. m2A2503 modification seems to play a crucial role in the proofreading step occurring at the peptidyl transferase center and thus would serve to optimize ribosomal fidelity. This Coxiella burnetii (strain RSA 493 / Nine Mile phase I) protein is Dual-specificity RNA methyltransferase RlmN.